The primary structure comprises 278 residues: HTH-type transcriptional activator RhaS (278 aa).

The region spanning 174 to 272 (NQLMAWLEDH…SWSPREIRQG (99 aa)) is the HTH araC/xylS-type domain. 2 consecutive DNA-binding regions (H-T-H motif) follow at residues 191-212 (ETVADVFSLSLRTLHRQLKQHT) and 239-262 (VTDIAYRCGFGDSNHFSTLFRREF).

Binds DNA as a dimer.

Its subcellular location is the cytoplasm. In terms of biological role, activates expression of the rhaBAD and rhaT operons. This chain is HTH-type transcriptional activator RhaS, found in Enterobacter sp. (strain 638).